Here is a 338-residue protein sequence, read N- to C-terminus: MELWGRMLWALLSGPGRRGSTRGWAFSSWQPQPPLAGLSSAIELVSHWTGVFEKRGIPEARESSEYIVAHVLGAKTFQSLRPALWTQPLTSQQLQCIRELSSRRLQRMPVQYILGEWDFQGLSLRMVPPVFIPRPETEELVEWVLEEVAQRSHAVGSPGSPLILEVGCGSGAISLSLLSQLPQSRVIAVDKREAAISLTHENAQRLRLQDRIWIIHLDMTSERSWTHLPWGPMDLIVSNPPYVFHQDMEQLAPEIRSYEDPAALDGGEEGMDIITHILALAPRLLKDSGSIFLEVDPRHPELVSSWLQSRPDLYLNLVAVRRDFCGRPRFLHIRRSGP.

Residues 167 to 171 (GCGSG), Asp-190, Trp-225, and Asn-239 contribute to the S-adenosyl-L-methionine site. A substrate-binding site is contributed by 239 to 242 (NPPY).

Belongs to the protein N5-glutamine methyltransferase family.

The protein resides in the mitochondrion. The enzyme catalyses L-glutaminyl-[peptide chain release factor] + S-adenosyl-L-methionine = N(5)-methyl-L-glutaminyl-[peptide chain release factor] + S-adenosyl-L-homocysteine + H(+). Functionally, N5-glutamine methyltransferase responsible for the methylation of the glutamine residue in the universally conserved GGQ motif of the mitochondrial translation release factors MTRF1, MTRF1L, MRPL58/ICT1 and MTRFR. In Homo sapiens (Human), this protein is MTRF1L release factor glutamine methyltransferase (HEMK1).